A 69-amino-acid chain; its full sequence is DNA-directed RNA polymerase subunit epsilon (69 aa).

The protein belongs to the RNA polymerase subunit epsilon family. As to quaternary structure, RNAP is composed of a core of 2 alpha, a beta and a beta' subunit. The core is associated with a delta subunit, and at least one of epsilon or omega. When a sigma factor is associated with the core the holoenzyme is formed, which can initiate transcription.

The enzyme catalyses RNA(n) + a ribonucleoside 5'-triphosphate = RNA(n+1) + diphosphate. Its function is as follows. A non-essential component of RNA polymerase (RNAP). The polypeptide is DNA-directed RNA polymerase subunit epsilon (Bacillus pumilus (strain SAFR-032)).